A 648-amino-acid polypeptide reads, in one-letter code: Threonine--tRNA ligase (648 aa).

In terms of domain architecture, TGS spans 1-62 (MVEIILPDGS…PHGAQVAIIT (62 aa)). The catalytic stretch occupies residues 243–536 (DHRRIGKDLD…LVEHYAGWFP (294 aa)). Zn(2+)-binding residues include cysteine 336, histidine 387, and histidine 513.

It belongs to the class-II aminoacyl-tRNA synthetase family. In terms of assembly, homodimer. Zn(2+) serves as cofactor.

Its subcellular location is the cytoplasm. It carries out the reaction tRNA(Thr) + L-threonine + ATP = L-threonyl-tRNA(Thr) + AMP + diphosphate + H(+). Its function is as follows. Catalyzes the attachment of threonine to tRNA(Thr) in a two-step reaction: L-threonine is first activated by ATP to form Thr-AMP and then transferred to the acceptor end of tRNA(Thr). Also edits incorrectly charged L-seryl-tRNA(Thr). The protein is Threonine--tRNA ligase of Magnetococcus marinus (strain ATCC BAA-1437 / JCM 17883 / MC-1).